Consider the following 868-residue polypeptide: Leucine--tRNA ligase (868 aa).

A 'HIGH' region motif is present at residues 42–52; it reads PYPSGKLHMGH. The short motif at 627–631 is the 'KMSKS' region element; that stretch reads KMAKS. K630 serves as a coordination point for ATP.

Belongs to the class-I aminoacyl-tRNA synthetase family.

It is found in the cytoplasm. It catalyses the reaction tRNA(Leu) + L-leucine + ATP = L-leucyl-tRNA(Leu) + AMP + diphosphate. The protein is Leucine--tRNA ligase of Pseudomonas fluorescens (strain ATCC BAA-477 / NRRL B-23932 / Pf-5).